The chain runs to 118 residues: Cell division protein FtsB (118 aa).

Residues 1 to 6 (MRNWRW) lie on the Cytoplasmic side of the membrane. A helical membrane pass occupies residues 7–24 (LLLVLAALLAWLQHRFWF). The Periplasmic segment spans residues 25 to 118 (GPGNSGEVRM…DLSQPRREKR (94 aa)). Positions 30–66 (GEVRMLQVQIVQQHQENERLRQRNASLAAEVKNLKDG) form a coiled coil. Residues 98–118 (LPNDTSADHGVDLSQPRREKR) form a disordered region. Residues 103 to 118 (SADHGVDLSQPRREKR) are compositionally biased toward basic and acidic residues.

It belongs to the FtsB family. Part of a complex composed of FtsB, FtsL and FtsQ.

Its subcellular location is the cell inner membrane. Essential cell division protein. May link together the upstream cell division proteins, which are predominantly cytoplasmic, with the downstream cell division proteins, which are predominantly periplasmic. This is Cell division protein FtsB from Xylella fastidiosa (strain M23).